We begin with the raw amino-acid sequence, 91 residues long: Transcription factor znf27 (91 aa).

The protein resides in the nucleus. Its function is as follows. Transcription factor; part of the gene cluster 27 that mediates the biosynthesis of asparasone A, a sclerotium-specific anthraquinone pigment important for sclerotial survival. Controls the expression of the non-reducing polyketide synthase (NRPKS) pks27. This chain is Transcription factor znf27, found in Aspergillus flavus (strain ATCC 200026 / FGSC A1120 / IAM 13836 / NRRL 3357 / JCM 12722 / SRRC 167).